The chain runs to 1355 residues: DNA-directed RNA polymerase subunit beta' (1355 aa).

Zn(2+) is bound by residues C219, C293, C300, and C303. Positions 1331-1355 (AEVEVDDEVDDDYEDDDEDDDDYED) are disordered.

The protein belongs to the RNA polymerase beta' chain family. RpoC2 subfamily. As to quaternary structure, in cyanobacteria the RNAP catalytic core is composed of 2 alpha, 1 beta, 1 beta', 1 gamma and 1 omega subunit. When a sigma factor is associated with the core the holoenzyme is formed, which can initiate transcription. The cofactor is Zn(2+).

The enzyme catalyses RNA(n) + a ribonucleoside 5'-triphosphate = RNA(n+1) + diphosphate. Functionally, DNA-dependent RNA polymerase catalyzes the transcription of DNA into RNA using the four ribonucleoside triphosphates as substrates. In Nostoc sp. (strain PCC 7120 / SAG 25.82 / UTEX 2576), this protein is DNA-directed RNA polymerase subunit beta'.